A 476-amino-acid polypeptide reads, in one-letter code: Cytosolic iron-sulfur assembly component 3 (476 aa).

A2 carries the post-translational modification N-acetylalanine. C24, C71, C74, C77, C190, C246, C395, and C399 together coordinate [4Fe-4S] cluster.

Belongs to the NARF family. In terms of assembly, external component of the CIA complex. In the CIA complex, interacts directly with CIAO1 and MMS19.

Component of the cytosolic iron-sulfur protein assembly (CIA) complex, a multiprotein complex that mediates the incorporation of iron-sulfur cluster into extramitochondrial Fe/S proteins. Seems to negatively regulate the level of HIF1A expression, although this effect could be indirect. The polypeptide is Cytosolic iron-sulfur assembly component 3 (Pongo abelii (Sumatran orangutan)).